Here is a 382-residue protein sequence, read N- to C-terminus: Nonsense-mediated mRNA decay factor SMG9 (382 aa).

Residues 1 to 66 (MKKVEILKTP…PDSSVSKSSG (66 aa)) are disordered.

Belongs to the SMG9 family.

In terms of biological role, involved in nonsense-mediated decay (NMD) of mRNAs containing premature stop codons. Probable component of kinase complex containing smg-1 and recruited to stalled ribosomes. This is Nonsense-mediated mRNA decay factor SMG9 (smg-9) from Caenorhabditis briggsae.